The primary structure comprises 464 residues: GDNF family receptor alpha-2 (464 aa).

The N-terminal stretch at 1-21 is a signal peptide; the sequence is MILANVFCLFFFLDETLRSLA. Cystine bridges form between C40/C93, C95/C105, C161/C222, C168/C174, C185/C200, C195/C241, C224/C229, C251/C323, C258/C264, C275/C293, and C285/C347. N-linked (GlcNAc...) asparagine glycosylation occurs at N52. N357 carries an N-linked (GlcNAc...) asparagine glycan. Residues 363–392 form a disordered region; the sequence is VSPKGPSFQATQAPRVEKTPSLPDDLSDST. Residues 381-392 show a composition bias toward low complexity; the sequence is TPSLPDDLSDST. An N-linked (GlcNAc...) asparagine glycan is attached at N413. The GPI-anchor amidated serine moiety is linked to residue S444. The propeptide at 445–464 is removed in mature form; that stretch reads RARPSAALTVLSVLMLKLAL.

The protein belongs to the GDNFR family. As to quaternary structure, interacts with NRTN ligand and RET: forms a 2:2:2 ternary complex composed of NRTN ligand, GFRA2 and RET receptor. Also forms a 4:4:4 tetrameric complex composed of 4 copies of NRTN ligand, GFRA2 and RET receptor, which prevents endocytosis of RET. Interacts with SORL1. In terms of tissue distribution, found in both brain and placenta.

It localises to the cell membrane. Its function is as follows. Receptor for neurturin (NRTN), a growth factor that supports the survival of sympathetic neurons. NRTN-binding leads to autophosphorylation and activation of the RET receptor. Also able to mediate GDNF signaling through the RET tyrosine kinase receptor. Participates in NRTN-induced 'Ser-727' phosphorylation of STAT3. The polypeptide is GDNF family receptor alpha-2 (GFRA2) (Homo sapiens (Human)).